A 65-amino-acid polypeptide reads, in one-letter code: Seminal plasma acrosin inhibitor A1 (65 aa).

One can recognise a Kazal-like domain in the interval 1–59 (TRKQPNCNVYRSHLFFCTRQMDPICGTNGKSYANPCIFCSEKGLRNQKFDFGHWGHCRE). 3 disulfide bridges follow: cysteine 7-cysteine 39, cysteine 17-cysteine 36, and cysteine 25-cysteine 57. Residue serine 12 is glycosylated (O-linked (GalNAc...) serine). A glycan (O-linked (GalNAc...) serine) is linked at serine 62.

In terms of processing, the identity of the O-linked saccharides are not reported in Ref.1. The O-linked polysaccharides on Ser-12 and Ser-62 are probably the mucin type linked to GalNAc. As to expression, seminal plasma.

The protein resides in the secreted. Its function is as follows. Inhibits acrosin. The chain is Seminal plasma acrosin inhibitor A1 from Sus scrofa (Pig).